The chain runs to 322 residues: MPIAEEEKLLPLTQRWPRTSKFLLSGCAATVAELATFPLDLTKTRLQMQGEAALARLGDGAVDSAPYRGMVRTALGIVQEEGFLKLWQGVTPAIYRHVVYSGGRMVTYEHLREVVFGKSEDKHYPLWKSVIGGMMAGVIGQFLANPTDLVKVQMQMEGKRRLEGKPLRFRGVHHAFAKILAEGGIRGLWAGWIPNIQRAALVNMGDLTTYDTVKHYLVLNTPLEDNISTHGLSSLCSGLVASILGTPADVIKSRIMNQPRDKQGRGLLYKSSADCLIQAVQGEGFLSLYKGFLPSWLRMTPWSMVFWLTYEKIREMSGVSPF.

3 Solcar repeats span residues 20 to 114, 124 to 216, and 225 to 316; these read SKFL…LREV, YPLW…VKHY, and DNIS…IREM. Helical transmembrane passes span 22-39, 87-108, 126-143, 194-211, 228-247, and 287-310; these read FLLSGCAATVAELATFPL, WQGVTPAIYRHVVYSGGRMVTY, LWKSVIGGMMAGVIGQFL, PNIQRAALVNMGDLTTYD, STHGLSSLCSGLVASILGTP, and SLYKGFLPSWLRMTPWSMVFWLTY.

The protein belongs to the mitochondrial carrier (TC 2.A.29) family. In terms of assembly, homotetramer.

Its subcellular location is the mitochondrion inner membrane. The protein localises to the cell projection. It is found in the neuron projection. The enzyme catalyses H(+)(in) = H(+)(out). It catalyses the reaction chloride(in) = chloride(out). Its function is as follows. Facilitates proton transport across the inner mitochondrial membrane and may dissipate excessive proton gradient associated with oxidative and metabolic stress at neuronal synapses. Regulates glutamate-induced proton conductance in astrocytes, shifting the energy metabolism toward aerobic glycolysis and lactate transfer to neurons for ATP synthesis. Can transport chloride ions with lower efficiency. The transport mechanism remains to be elucidated. This Mus musculus (Mouse) protein is Mitochondrial uncoupling protein 4.